Here is a 208-residue protein sequence, read N- to C-terminus: Adenylyl-sulfate kinase (208 aa).

Residue 35-42 (GLSGSGKS) coordinates ATP. Residue S109 is the Phosphoserine intermediate of the active site.

The protein belongs to the APS kinase family.

It catalyses the reaction adenosine 5'-phosphosulfate + ATP = 3'-phosphoadenylyl sulfate + ADP + H(+). Its pathway is sulfur metabolism; hydrogen sulfide biosynthesis; sulfite from sulfate: step 2/3. Functionally, catalyzes the synthesis of activated sulfate. This Geotalea uraniireducens (strain Rf4) (Geobacter uraniireducens) protein is Adenylyl-sulfate kinase.